A 378-amino-acid polypeptide reads, in one-letter code: Acetylornithine deacetylase (378 aa).

Zn(2+) is bound at residue H76. Residue D78 is part of the active site. D108 contributes to the Zn(2+) binding site. The active site involves E140. Zn(2+) contacts are provided by E141, E165, and H351.

It belongs to the peptidase M20A family. ArgE subfamily. As to quaternary structure, homodimer. The cofactor is Zn(2+). It depends on Co(2+) as a cofactor. Glutathione serves as cofactor.

The protein resides in the cytoplasm. It carries out the reaction N(2)-acetyl-L-ornithine + H2O = L-ornithine + acetate. Its pathway is amino-acid biosynthesis; L-arginine biosynthesis; L-ornithine from N(2)-acetyl-L-ornithine (linear): step 1/1. Catalyzes the hydrolysis of the amide bond of N(2)-acetylated L-amino acids. Cleaves the acetyl group from N-acetyl-L-ornithine to form L-ornithine, an intermediate in L-arginine biosynthesis pathway, and a branchpoint in the synthesis of polyamines. The protein is Acetylornithine deacetylase of Vibrio atlanticus (strain LGP32) (Vibrio splendidus (strain Mel32)).